A 639-amino-acid chain; its full sequence is Collagen alpha-1(XII) chain (639 aa).

The region spanning 1-114 (CRKSLLQAVA…DSLSKIVDDL (114 aa)) is the VWFA domain. 6 Fibronectin type-III domains span residues 130 to 219 (APSN…LPVP), 220 to 310 (IVSL…LPLP), 311 to 401 (RPQD…VPAP), 402 to 490 (TNLR…SPKS), 491 to 585 (GPRN…TVRN), and 586 to 639 (LRVY…LRNL). Positions 473–496 (DESESDDLTGSERTSPKSGPRNLQ) are disordered.

This sequence belongs to the fibril-associated collagens with interrupted helices (FACIT) family. In terms of assembly, trimer of identical chains each containing 190 kDa of non-triple-helical sequences. The triple-helical tail is stabilized by disulfide bonds at each end. Post-translationally, prolines at the third position of the tripeptide repeating unit (G-X-Y) are hydroxylated in some or all of the chains. In terms of processing, O-glycosylated; glycosaminoglycan of chondroitin-sulfate type.

The protein localises to the secreted. It localises to the extracellular space. Its subcellular location is the extracellular matrix. In terms of biological role, type XII collagen interacts with type I collagen-containing fibrils, the COL1 domain could be associated with the surface of the fibrils, and the COL2 and NC3 domains may be localized in the perifibrillar matrix. The chain is Collagen alpha-1(XII) chain (COL12A1) from Oryctolagus cuniculus (Rabbit).